A 631-amino-acid polypeptide reads, in one-letter code: Glycosyltransferase-like protein LARGE (631 aa).

Over 1 to 6 the chain is Cytoplasmic; that stretch reads MQSNYS. The helical; Signal-anchor for type II membrane protein transmembrane segment at 7 to 27 threads the bilayer; sequence ISYFLLILFTGTSSYFTIWNF. Residues 28–631 are Lumenal-facing; that stretch reads VDHTRVGAFP…TASRLGIKLR (604 aa). Asn-95, Asn-105, Asn-167, Asn-177, Asn-287, Asn-400, Asn-485, Asn-502, Asn-521, Asn-529, and Asn-593 each carry an N-linked (GlcNAc...) asparagine glycan.

The protein belongs to the glycosyltransferase 8 family.

It localises to the golgi apparatus membrane. Functionally, probable glycosyltransferase. In Caenorhabditis elegans, this protein is Glycosyltransferase-like protein LARGE (lge-1).